Here is an 88-residue protein sequence, read N- to C-terminus: Large ribosomal subunit protein bL27 (88 aa).

The segment at 1 to 24 (MAHKKGTGSTRNGRDSNSKRLGVK) is disordered.

The protein belongs to the bacterial ribosomal protein bL27 family.

In Synechococcus sp. (strain CC9311), this protein is Large ribosomal subunit protein bL27.